We begin with the raw amino-acid sequence, 195 residues long: Ribonuclease HII (195 aa).

The 190-residue stretch at 6 to 195 (SLIAGVDEVG…KSFISRLKKN (190 aa)) folds into the RNase H type-2 domain. Residues D12, E13, and D108 each coordinate a divalent metal cation.

The protein belongs to the RNase HII family. Requires Mn(2+) as cofactor. It depends on Mg(2+) as a cofactor.

The protein localises to the cytoplasm. The enzyme catalyses Endonucleolytic cleavage to 5'-phosphomonoester.. Endonuclease that specifically degrades the RNA of RNA-DNA hybrids. The chain is Ribonuclease HII from Prochlorococcus marinus (strain NATL2A).